Here is a 123-residue protein sequence, read N- to C-terminus: UPF0342 protein LAR_1202 (123 aa).

The protein belongs to the UPF0342 family.

This is UPF0342 protein LAR_1202 from Limosilactobacillus reuteri subsp. reuteri (strain JCM 1112) (Lactobacillus reuteri).